Here is a 325-residue protein sequence, read N- to C-terminus: Oligopeptide transport system permease protein OppB (325 aa).

The next 6 membrane-spanning stretches (helical) occupy residues 12–32, 102–122, 135–155, 189–208, 248–268, and 290–310; these read YLVLLALASFLTYCLTSLAFS, LVVGSVFGTVAGVVIGAWGAI, LALLVLSTPTFVVANLLILGA, LQHLILPSLTLALAAAAGFS, IPMATLFAYGVAGLVTGAVFV, and TNIVAAITVFSGAVVLLAGLL. In terms of domain architecture, ABC transmembrane type-1 spans 95–311; sequence IGVSLRLLVV…AVVLLAGLLS (217 aa).

Belongs to the binding-protein-dependent transport system permease family. OppBC subfamily. As to quaternary structure, the complex is composed of an ATP-binding protein (OppD), two transmembrane proteins (OppB and OppC) and a solute-binding protein (OppA).

The protein localises to the cell inner membrane. In terms of biological role, part of the ABC transporter complex OppABCD involved in the uptake of oligopeptides. Responsible for the translocation of the substrate across the membrane. This is Oligopeptide transport system permease protein OppB from Mycobacterium bovis (strain ATCC BAA-935 / AF2122/97).